A 282-amino-acid chain; its full sequence is MSVATPRAFVVGHPIAHSRSPLIHGHWLAVHGIPGSYERLDVPPAAFPDFVRGLPDSGFRGGNVTIPHKEAAFALADTLTPRARAIGAVNTLVVGPDGRIRGDNTDAPGFCAHLDHSLGAAWPERAGGTALVLGAGGAARAVVVGLAERGLRRVWVANRTAARAEAVAALAPGVGAALAWDDLPAALPGTGLLVNTTSLGMKGQPPLAVDLSPLPADAAVADIVYAPLETALLAAARRRGLAAVDGLGMLLHQAVPGFEAWFGPRPRVTPELRDRIVADLAG.

Residues 18 to 20 and threonine 65 contribute to the shikimate site; that span reads SRS. Lysine 69 acts as the Proton acceptor in catalysis. Shikimate-binding residues include asparagine 90 and aspartate 106. NADP(+)-binding positions include 134-138, 158-163, and isoleucine 223; these read GAGGA and NRTAAR. Position 225 (tyrosine 225) interacts with shikimate. NADP(+) is bound at residue glycine 246.

This sequence belongs to the shikimate dehydrogenase family. In terms of assembly, homodimer.

The catalysed reaction is shikimate + NADP(+) = 3-dehydroshikimate + NADPH + H(+). It participates in metabolic intermediate biosynthesis; chorismate biosynthesis; chorismate from D-erythrose 4-phosphate and phosphoenolpyruvate: step 4/7. Functionally, involved in the biosynthesis of the chorismate, which leads to the biosynthesis of aromatic amino acids. Catalyzes the reversible NADPH linked reduction of 3-dehydroshikimate (DHSA) to yield shikimate (SA). This is Shikimate dehydrogenase (NADP(+)) from Methylobacterium radiotolerans (strain ATCC 27329 / DSM 1819 / JCM 2831 / NBRC 15690 / NCIMB 10815 / 0-1).